Consider the following 145-residue polypeptide: Large ribosomal subunit protein uL16 (145 aa).

This sequence belongs to the universal ribosomal protein uL16 family. In terms of assembly, part of the 50S ribosomal subunit.

Functionally, binds 23S rRNA and is also seen to make contacts with the A and possibly P site tRNAs. The chain is Large ribosomal subunit protein uL16 from Shouchella clausii (strain KSM-K16) (Alkalihalobacillus clausii).